Here is a 398-residue protein sequence, read N- to C-terminus: Protein ELC (398 aa).

In terms of domain architecture, UEV spans 18 to 162 (ALSQRGPSSV…ARDPPLYSRR (145 aa)). Positions 157–202 (PLYSRRRPQPPPPSPPTVYDSSLSRPPSADQSLPRPFPPSPYGGGV) are disordered. Residues 175-187 (YDSSLSRPPSADQ) show a composition bias toward polar residues. Residues 247–291 (EAEAEELLSLQAGLKRREDELNIGLKEMVEEKETLEQQLQIISMN) adopt a coiled-coil conformation. One can recognise an SB domain in the interval 322–390 (DTLSKQMLEC…RAAQMEVQVA (69 aa)).

This sequence belongs to the ubiquitin-conjugating enzyme family. UEV subfamily. Component of the endosomal sorting required for transport complex I (ESCRT-I), composed of ELC, VPS28 and VPS37. Interacts with VPS28 and VPS37. Binds ubiquitin in vitro. Interacts with FREE1. Interacts with TOL9/TOM1D. Interacts with BRO1/ALIX. Interacts with SINAT1, SINAT2, SINAT3 and SINAT4. Post-translationally, ubiquitinated by SINAT1, SINAT2, SINAT3 and SINAT4 for subsequent proteasomal degradation. As to expression, expressed in roots, stems, leaves and flowers.

It is found in the early endosome. Its subcellular location is the late endosome. It localises to the prevacuolar compartment. Its function is as follows. Component of the ESCRT-I complex (endosomal sorting complex required for transport I), a regulator of vesicular trafficking process. Required for the sorting of endocytic ubiquitinated cargos into multivesicular bodies (MVBs). May control nuclear division through the microtubule cytoskeleton. The protein is Protein ELC of Arabidopsis thaliana (Mouse-ear cress).